The chain runs to 215 residues: Redox-sensing transcriptional repressor Rex (215 aa).

Positions L18–F57 form a DNA-binding region, H-T-H motif. G92–G97 serves as a coordination point for NAD(+).

Belongs to the transcriptional regulatory Rex family. Homodimer.

It is found in the cytoplasm. Its function is as follows. Modulates transcription in response to changes in cellular NADH/NAD(+) redox state. This is Redox-sensing transcriptional repressor Rex from Geobacillus sp. (strain WCH70).